Reading from the N-terminus, the 502-residue chain is Vicilin Jug r 6.0101 (502 aa).

An N-terminal signal peptide occupies residues 1-27; the sequence is MAFKPKIPIALLLLTSLLAICAGLALA. The span at 67–84 shows a compositional bias: basic and acidic residues; that stretch reads ARERAERRRSEEGSSREE. The tract at residues 67–100 is disordered; sequence ARERAERRRSEEGSSREEGYEEEELGGEREEENP. Positions 85-100 are enriched in acidic residues; the sequence is GYEEEELGGEREEENP. Cupin type-1 domains follow at residues 101–259 and 302–475; these read YVFE…DQLE and FNLF…REVE. Asn340 carries N-linked (GlcNAc...) asparagine glycosylation. Residues 374-401 are disordered; that stretch reads HLSSSGSRGQREGSGSSRRRSRSGPSYQ. The span at 376–389 shows a compositional bias: low complexity; the sequence is SSSGSRGQREGSGS.

This sequence belongs to the 7S seed storage protein family. As to quaternary structure, homotrimer. Post-translationally, N-glycosylated; paucimannose-type structures containing xylose. As to expression, expressed in seed (at protein level).

Its function is as follows. Seed storage protein. The sequence is that of Vicilin Jug r 6.0101 from Juglans regia (English walnut).